Here is a 219-residue protein sequence, read N- to C-terminus: Lipid A acyltransferase PagP (219 aa).

A signal peptide spans methionine 1–alanine 28. The disordered stretch occupies residues isoleucine 39–phenylalanine 63. Basic and acidic residues predominate over residues threonine 49 to proline 59. Active-site residues include histidine 91, aspartate 134, and serine 135.

Belongs to the lipid A palmitoyltransferase family. In terms of assembly, homodimer.

It localises to the cell outer membrane. It carries out the reaction a lipid A + a 1,2-diacyl-sn-glycero-3-phosphocholine = a hepta-acyl lipid A + a 2-acyl-sn-glycero-3-phosphocholine. The enzyme catalyses a lipid IVA + a 1,2-diacyl-sn-glycero-3-phosphocholine = a lipid IVB + a 2-acyl-sn-glycero-3-phosphocholine. It catalyses the reaction a lipid IIA + a 1,2-diacyl-sn-glycero-3-phosphocholine = a lipid IIB + a 2-acyl-sn-glycero-3-phosphocholine. Functionally, transfers a fatty acid residue from the sn-1 position of a phospholipid to the N-linked hydroxyfatty acid chain on the proximal unit of lipid A or its precursors. The polypeptide is Lipid A acyltransferase PagP (Dickeya zeae (strain Ech586) (Dickeya dadantii (strain Ech586))).